The following is a 327-amino-acid chain: Endochitinase CH5B (327 aa).

The first 26 residues, 1-26 (MKKNRMMIMICSVGVVWMLLVGGSYG), serve as a signal peptide directing secretion. One can recognise a Chitin-binding type-1 domain in the interval 27-67 (EQCGRQAGGALCPGGNCCSQFGWCGSTTDYCGKDCQSQCGG). 7 disulfide bridges follow: cysteine 29/cysteine 44, cysteine 38/cysteine 50, cysteine 43/cysteine 57, cysteine 61/cysteine 65, cysteine 96/cysteine 158, cysteine 169/cysteine 177, and cysteine 276/cysteine 308. Glutamate 140 (proton donor) is an active-site residue. The propeptide at 317-327 (SLFLSDLVTSQ) is removed in mature form.

It belongs to the glycosyl hydrolase 19 family. Chitinase class I subfamily.

The protein resides in the vacuole. The catalysed reaction is Random endo-hydrolysis of N-acetyl-beta-D-glucosaminide (1-&gt;4)-beta-linkages in chitin and chitodextrins.. In terms of biological role, defense against chitin-containing fungal pathogens. The protein is Endochitinase CH5B of Phaseolus vulgaris (Kidney bean).